A 365-amino-acid polypeptide reads, in one-letter code: GTPase Obg (365 aa).

Residues 2–160 enclose the Obg domain; it reads ESFVDEVAIE…KFLRLSLKLL (159 aa). Residues 161-329 form the OBG-type G domain; that stretch reads ADVGIVGLPN…LLEAMDEAFF (169 aa). Residues 167–174, 192–196, 215–218, 282–285, and 310–312 each bind GTP; these read GLPNAGKS, FTTLS, DIPG, NKID, and SAD. Mg(2+) contacts are provided by Ser174 and Thr194.

The protein belongs to the TRAFAC class OBG-HflX-like GTPase superfamily. OBG GTPase family. As to quaternary structure, monomer. Requires Mg(2+) as cofactor.

It is found in the cytoplasm. In terms of biological role, an essential GTPase which binds GTP, GDP and possibly (p)ppGpp with moderate affinity, with high nucleotide exchange rates and a fairly low GTP hydrolysis rate. Plays a role in control of the cell cycle, stress response, ribosome biogenesis and in those bacteria that undergo differentiation, in morphogenesis control. This chain is GTPase Obg, found in Leptospira borgpetersenii serovar Hardjo-bovis (strain JB197).